A 466-amino-acid chain; its full sequence is Oryzain beta chain (466 aa).

An N-terminal signal peptide occupies residues 1–21 (MAARAAAAAFLLLLIVGAATA). A propeptide spans 22-140 (APDMSIISYN…ERYRHDGVEE (119 aa)) (activation peptide). Intrachain disulfides connect C162–C205, C196–C238, and C296–C347. The active site involves C165. Residues H302 and N322 contribute to the active site. A glycan (N-linked (GlcNAc...) asparagine) is linked at N341. A disordered region spans residues 358–380 (KSGANPPKPSPTPPTPPTPPPPS). The propeptide at 362–466 (NPPKPSPTPP…KRTLAKLNTA (105 aa)) is removed in mature form. Over residues 363-380 (PPKPSPTPPTPPTPPPPS) the composition is skewed to pro residues. 2 cysteine pairs are disulfide-bonded: C386/C398 and C392/C413. N389 carries an N-linked (GlcNAc...) asparagine glycan.

Belongs to the peptidase C1 family. In terms of tissue distribution, expressed only in seeds.

Its function is as follows. Probable thiol protease. In Oryza sativa subsp. japonica (Rice), this protein is Oryzain beta chain.